Consider the following 450-residue polypeptide: Probable helicase D10 (450 aa).

The region spanning 95-240 (PIYEECDDTC…MFKDFFGYKI (146 aa)) is the Helicase ATP-binding domain. An ATP-binding site is contributed by 108–115 (GKPGFGKT). The short motif at 193-196 (DEVH) is the DEAH box element. The Helicase C-terminal domain occupies 289–439 (NLAHLYVNMG…TITMTPEKAV (151 aa)).

The enzyme catalyses ATP + H2O = ADP + phosphate + H(+). The polypeptide is Probable helicase D10 (D10) (Escherichia phage T5 (Enterobacteria phage T5)).